Consider the following 236-residue polypeptide: UPF0257 lipoprotein YnfC (236 aa).

The signal sequence occupies residues 1 to 16 (MKYKLLPCLLAIFLTG). A lipid anchor (N-palmitoyl cysteine) is attached at Cys-17. A lipid anchor (S-diacylglycerol cysteine) is attached at Cys-17.

This sequence belongs to the UPF0257 family.

It localises to the cell membrane. This Escherichia coli O17:K52:H18 (strain UMN026 / ExPEC) protein is UPF0257 lipoprotein YnfC.